Consider the following 508-residue polypeptide: Serine/threonine-protein kinase VRK2 (508 aa).

Positions 29 to 319 constitute a Protein kinase domain; the sequence is WVLGKKIGSG…KKILNPHGIP (291 aa). ATP-binding positions include 35-43 and K61; that span reads IGSGGFGLI. D166 serves as the catalytic Proton acceptor. Phosphothreonine is present on T336. Residues 397 to 508 form an interaction with MAP3K7 region; the sequence is TRRRQKYQES…MLVFLALFFL (112 aa). S406 carries the post-translational modification Phosphoserine. Residues 487-507 traverse the membrane as a helical; Anchor for type IV membrane protein segment; it reads VYYYRIIIPVLLMLVFLALFF.

This sequence belongs to the protein kinase superfamily. CK1 Ser/Thr protein kinase family. VRK subfamily. In terms of assembly, isoform 1 interacts with MAP3K7, MAP2K7, MAP2K1 and KSR1. Isoform 1 and isoform 2 interact with RAN and MAPK8IP1. (Microbial infection) Isoform 1 interacts with Epstein-Barr virus BHRF1; this interaction is involved in protecting cells from apoptosis. As to quaternary structure, (Microbial infection) Isoform 1 interacts with vaccinia protein B12. In terms of processing, autophosphorylated. Isoform 1 and isoform 2 are expressed in various tumor cell lines. Expression of isoform 1 inversely correlates with ERBB2 in breast carcinomas (at protein level). Widely expressed. Highly expressed in fetal liver, skeletal muscle, pancreas, heart, peripheral blood leukocytes and testis.

It localises to the cytoplasm. The protein resides in the endoplasmic reticulum membrane. It is found in the mitochondrion membrane. Its subcellular location is the nucleus envelope. The protein localises to the nucleus. The catalysed reaction is L-seryl-[protein] + ATP = O-phospho-L-seryl-[protein] + ADP + H(+). It carries out the reaction L-threonyl-[protein] + ATP = O-phospho-L-threonyl-[protein] + ADP + H(+). With respect to regulation, RAN inhibits its autophosphorylation and its ability to phosphorylate histone H3. Serine/threonine kinase that regulates several signal transduction pathways. Isoform 1 modulates the stress response to hypoxia and cytokines, such as interleukin-1 beta (IL1B) and this is dependent on its interaction with MAPK8IP1, which assembles mitogen-activated protein kinase (MAPK) complexes. Inhibition of signal transmission mediated by the assembly of MAPK8IP1-MAPK complexes reduces JNK phosphorylation and JUN-dependent transcription. Phosphorylates 'Thr-18' of p53/TP53, histone H3, and may also phosphorylate MAPK8IP1. Phosphorylates BANF1 and disrupts its ability to bind DNA and reduces its binding to LEM domain-containing proteins. Down-regulates the transactivation of transcription induced by ERBB2, HRAS, BRAF, and MEK1. Blocks the phosphorylation of ERK in response to ERBB2 and HRAS. Can also phosphorylate the following substrates that are commonly used to establish in vitro kinase activity: casein, MBP and histone H2B, but it is not sure that this is physiologically relevant. Functionally, phosphorylates 'Thr-18' of p53/TP53, as well as histone H3. Reduces p53/TP53 ubiquitination by MDM2, promotes p53/TP53 acetylation by EP300 and thereby increases p53/TP53 stability and activity. In Homo sapiens (Human), this protein is Serine/threonine-protein kinase VRK2 (VRK2).